Here is a 165-residue protein sequence, read N- to C-terminus: Large ribosomal subunit protein uL10 (165 aa).

Belongs to the universal ribosomal protein uL10 family. Part of the ribosomal stalk of the 50S ribosomal subunit. The N-terminus interacts with L11 and the large rRNA to form the base of the stalk. The C-terminus forms an elongated spine to which L12 dimers bind in a sequential fashion forming a multimeric L10(L12)X complex.

Its function is as follows. Forms part of the ribosomal stalk, playing a central role in the interaction of the ribosome with GTP-bound translation factors. In Sodalis glossinidius (strain morsitans), this protein is Large ribosomal subunit protein uL10.